Consider the following 361-residue polypeptide: Beta-hexosaminidase (361 aa).

Substrate contacts are provided by residues Asp-69, Arg-77, Arg-144, and 174 to 175 (KH). The Proton donor/acceptor role is filled by His-187. The active-site Nucleophile is the Asp-258.

It belongs to the glycosyl hydrolase 3 family. NagZ subfamily.

It localises to the cytoplasm. It carries out the reaction Hydrolysis of terminal non-reducing N-acetyl-D-hexosamine residues in N-acetyl-beta-D-hexosaminides.. The protein operates within cell wall biogenesis; peptidoglycan recycling. Its function is as follows. Plays a role in peptidoglycan recycling by cleaving the terminal beta-1,4-linked N-acetylglucosamine (GlcNAc) from peptide-linked peptidoglycan fragments, giving rise to free GlcNAc, anhydro-N-acetylmuramic acid and anhydro-N-acetylmuramic acid-linked peptides. The protein is Beta-hexosaminidase of Neisseria gonorrhoeae (strain NCCP11945).